We begin with the raw amino-acid sequence, 549 residues long: Glucose-6-phosphate isomerase (549 aa).

Lys-80, Lys-228, and Lys-234 each carry N6-acetyllysine. Glu-355 serves as the catalytic Proton donor. Catalysis depends on residues His-386 and Lys-514.

This sequence belongs to the GPI family.

It is found in the cytoplasm. It catalyses the reaction alpha-D-glucose 6-phosphate = beta-D-fructose 6-phosphate. Its pathway is carbohydrate biosynthesis; gluconeogenesis. It functions in the pathway carbohydrate degradation; glycolysis; D-glyceraldehyde 3-phosphate and glycerone phosphate from D-glucose: step 2/4. Functionally, catalyzes the reversible isomerization of glucose-6-phosphate to fructose-6-phosphate. This is Glucose-6-phosphate isomerase from Shigella flexneri serotype 5b (strain 8401).